Consider the following 339-residue polypeptide: Dihydroorotate dehydrogenase (quinone) (339 aa).

FMN-binding positions include 62–66 (AGMDK) and Thr-86. Lys-66 contributes to the substrate binding site. 111–115 (NRMGF) lines the substrate pocket. Residues Asn-139 and Asn-172 each contribute to the FMN site. Asn-172 contributes to the substrate binding site. Ser-175 (nucleophile) is an active-site residue. Residue Asn-177 coordinates substrate. FMN contacts are provided by Lys-217 and Thr-245. 246–247 (NT) contributes to the substrate binding site. Residues Gly-268, Gly-297, and 318-319 (YS) each bind FMN.

Belongs to the dihydroorotate dehydrogenase family. Type 2 subfamily. As to quaternary structure, monomer. The cofactor is FMN.

It localises to the cell membrane. The enzyme catalyses (S)-dihydroorotate + a quinone = orotate + a quinol. Its pathway is pyrimidine metabolism; UMP biosynthesis via de novo pathway; orotate from (S)-dihydroorotate (quinone route): step 1/1. In terms of biological role, catalyzes the conversion of dihydroorotate to orotate with quinone as electron acceptor. The polypeptide is Dihydroorotate dehydrogenase (quinone) (Shewanella sp. (strain ANA-3)).